A 98-amino-acid polypeptide reads, in one-letter code: Aspartyl/glutamyl-tRNA(Asn/Gln) amidotransferase subunit C (98 aa).

The segment at 75-98 (AQALSGAPAQEQQRFKVPQILGED) is disordered.

It belongs to the GatC family. In terms of assembly, heterotrimer of A, B and C subunits.

The catalysed reaction is L-glutamyl-tRNA(Gln) + L-glutamine + ATP + H2O = L-glutaminyl-tRNA(Gln) + L-glutamate + ADP + phosphate + H(+). The enzyme catalyses L-aspartyl-tRNA(Asn) + L-glutamine + ATP + H2O = L-asparaginyl-tRNA(Asn) + L-glutamate + ADP + phosphate + 2 H(+). In terms of biological role, allows the formation of correctly charged Asn-tRNA(Asn) or Gln-tRNA(Gln) through the transamidation of misacylated Asp-tRNA(Asn) or Glu-tRNA(Gln) in organisms which lack either or both of asparaginyl-tRNA or glutaminyl-tRNA synthetases. The reaction takes place in the presence of glutamine and ATP through an activated phospho-Asp-tRNA(Asn) or phospho-Glu-tRNA(Gln). The protein is Aspartyl/glutamyl-tRNA(Asn/Gln) amidotransferase subunit C of Streptomyces griseus subsp. griseus (strain JCM 4626 / CBS 651.72 / NBRC 13350 / KCC S-0626 / ISP 5235).